Here is a 179-residue protein sequence, read N- to C-terminus: ATP synthase subunit delta (179 aa).

Belongs to the ATPase delta chain family. As to quaternary structure, F-type ATPases have 2 components, F(1) - the catalytic core - and F(0) - the membrane proton channel. F(1) has five subunits: alpha(3), beta(3), gamma(1), delta(1), epsilon(1). F(0) has three main subunits: a(1), b(2) and c(10-14). The alpha and beta chains form an alternating ring which encloses part of the gamma chain. F(1) is attached to F(0) by a central stalk formed by the gamma and epsilon chains, while a peripheral stalk is formed by the delta and b chains.

It is found in the cell inner membrane. F(1)F(0) ATP synthase produces ATP from ADP in the presence of a proton or sodium gradient. F-type ATPases consist of two structural domains, F(1) containing the extramembraneous catalytic core and F(0) containing the membrane proton channel, linked together by a central stalk and a peripheral stalk. During catalysis, ATP synthesis in the catalytic domain of F(1) is coupled via a rotary mechanism of the central stalk subunits to proton translocation. Its function is as follows. This protein is part of the stalk that links CF(0) to CF(1). It either transmits conformational changes from CF(0) to CF(1) or is implicated in proton conduction. This is ATP synthase subunit delta from Burkholderia lata (strain ATCC 17760 / DSM 23089 / LMG 22485 / NCIMB 9086 / R18194 / 383).